Reading from the N-terminus, the 77-residue chain is Inhibitor of histone-like protein HU (77 aa).

As to quaternary structure, interacts with host homodimeric histone-like protein (HU) hupA; thereby replacing dsDNA from the HU-DNA complex.

Acts as a host growth inhibitor by inhibiting DNA-binding of microbial histone-like protein HU, thereby preventing chromosome segregation and causing filamentous cell morphology and growth defects in the host. In Bacillus phage SP01 (Bacteriophage SP01), this protein is Inhibitor of histone-like protein HU.